The primary structure comprises 324 residues: Calmodulin-like protein 12 (324 aa).

EF-hand domains are found at residues 8-43, 44-79, 97-132, 133-168, 187-222, and 223-258; these read DQIT…IGEK, PTKA…NQGH, DQIT…LGKN, RTKA…NQGH, DQIL…LGET, and QTKA…KMID. Residues Asp-21, Asn-23, Asp-25, Ser-27, Glu-32, Asp-57, Asp-59, Asp-61, Thr-63, Glu-68, Asp-110, Asn-112, Asp-114, Ser-116, Glu-121, Asp-146, Asp-148, Asp-150, Thr-152, Glu-157, Asp-200, Asn-202, Asp-204, Tyr-206, Glu-211, Asp-236, Asp-238, Asp-240, Thr-242, and Glu-247 each contribute to the Ca(2+) site.

Belongs to the calmodulin family. Interacts with PID. Binds to ABCG36.

Potential calcium sensor that binds calcium in vitro. The polypeptide is Calmodulin-like protein 12 (Arabidopsis thaliana (Mouse-ear cress)).